Here is a 365-residue protein sequence, read N- to C-terminus: UDP-N-acetylglucosamine--N-acetylmuramyl-(pentapeptide) pyrophosphoryl-undecaprenol N-acetylglucosamine transferase (365 aa).

UDP-N-acetyl-alpha-D-glucosamine contacts are provided by residues 19-21 (TGG), asparagine 131, arginine 170, serine 201, isoleucine 255, 274-279 (ALTVTE), and glutamine 300.

This sequence belongs to the glycosyltransferase 28 family. MurG subfamily.

The protein localises to the cell inner membrane. It carries out the reaction di-trans,octa-cis-undecaprenyl diphospho-N-acetyl-alpha-D-muramoyl-L-alanyl-D-glutamyl-meso-2,6-diaminopimeloyl-D-alanyl-D-alanine + UDP-N-acetyl-alpha-D-glucosamine = di-trans,octa-cis-undecaprenyl diphospho-[N-acetyl-alpha-D-glucosaminyl-(1-&gt;4)]-N-acetyl-alpha-D-muramoyl-L-alanyl-D-glutamyl-meso-2,6-diaminopimeloyl-D-alanyl-D-alanine + UDP + H(+). It functions in the pathway cell wall biogenesis; peptidoglycan biosynthesis. Functionally, cell wall formation. Catalyzes the transfer of a GlcNAc subunit on undecaprenyl-pyrophosphoryl-MurNAc-pentapeptide (lipid intermediate I) to form undecaprenyl-pyrophosphoryl-MurNAc-(pentapeptide)GlcNAc (lipid intermediate II). The sequence is that of UDP-N-acetylglucosamine--N-acetylmuramyl-(pentapeptide) pyrophosphoryl-undecaprenol N-acetylglucosamine transferase from Acinetobacter baumannii (strain ATCC 17978 / DSM 105126 / CIP 53.77 / LMG 1025 / NCDC KC755 / 5377).